Here is a 179-residue protein sequence, read N- to C-terminus: Large ribosomal subunit protein uL5 (179 aa).

Belongs to the universal ribosomal protein uL5 family. Part of the 50S ribosomal subunit; part of the 5S rRNA/L5/L18/L25 subcomplex. Contacts the 5S rRNA and the P site tRNA. Forms a bridge to the 30S subunit in the 70S ribosome.

This is one of the proteins that bind and probably mediate the attachment of the 5S RNA into the large ribosomal subunit, where it forms part of the central protuberance. In the 70S ribosome it contacts protein S13 of the 30S subunit (bridge B1b), connecting the 2 subunits; this bridge is implicated in subunit movement. Contacts the P site tRNA; the 5S rRNA and some of its associated proteins might help stabilize positioning of ribosome-bound tRNAs. The sequence is that of Large ribosomal subunit protein uL5 from Vibrio cholerae serotype O1 (strain ATCC 39541 / Classical Ogawa 395 / O395).